Here is a 574-residue protein sequence, read N- to C-terminus: Cytochrome P450 4g15 (574 aa).

Residues 288–327 form a disordered region; the sequence is REREQNGGVDQTPSTAGSDEKDREKDKEKASPVAGLSYGQ. Over residues 295–304 the composition is skewed to polar residues; sequence GVDQTPSTAG. Over residues 305–317 the composition is skewed to basic and acidic residues; the sequence is SDEKDREKDKEKA. Heme contacts are provided by Glu-379 and Cys-519.

This sequence belongs to the cytochrome P450 family. Heme is required as a cofactor. In terms of tissue distribution, expressed in larval brain cortex cells and ring glands and weakly in larval digestive system and adult nervous system.

It localises to the endoplasmic reticulum membrane. Its subcellular location is the microsome membrane. Probably involved in steroid hormones biosynthesis. The sequence is that of Cytochrome P450 4g15 (Cyp4g15) from Drosophila melanogaster (Fruit fly).